A 140-amino-acid polypeptide reads, in one-letter code: MADRLTQLQTCVDQMLTQYFSALTHINTNHGFKSLAGEELVKDDTVPVVTDEERERTLEELAKDLVVKSQQIDYLIDSLPGIGSSEEHQMQQIEKLQKELEHYDQVTEDVIKEKDELLEHCDELILKLAQRKAHIDVESM.

Residues 52 to 130 (EERERTLEEL…CDELILKLAQ (79 aa)) adopt a coiled-coil conformation.

This sequence belongs to the Mediator complex subunit 21 family. As to quaternary structure, component of the Mediator complex.

Its subcellular location is the nucleus. In terms of biological role, component of the Mediator complex, a coactivator involved in the regulated transcription of nearly all RNA polymerase II-dependent genes. Mediator functions as a bridge to convey information from gene-specific regulatory proteins to the basal RNA polymerase II transcription machinery. Mediator is recruited to promoters by direct interactions with regulatory proteins and serves as a scaffold for the assembly of a functional preinitiation complex with RNA polymerase II and the general transcription factors. The sequence is that of Mediator of RNA polymerase II transcription subunit 21 (SRB7) from Yarrowia lipolytica (strain CLIB 122 / E 150) (Yeast).